The sequence spans 1280 residues: Ankyrin repeat and sterile alpha motif domain-containing protein 1B (1280 aa).

ANK repeat units lie at residues 2–31 (GKEQ…GLLG), 57–86 (SGYT…STNV), 90–119 (KGCF…SHSR), 126–155 (EKET…DPSM), 159–188 (RGET…NLMS), 192–221 (RKHT…DVNT), and 224–253 (EKGS…DANI). Disordered regions lie at residues 299–322 (RHRP…LRHK), 361–399 (MESF…EEKS), 479–573 (SVSD…STGS), 704–723 (NGEA…SNTG), and 755–791 (SNLV…PSFT). Basic and acidic residues predominate over residues 482–491 (DAERGNHGDD). Polar residues-rich tracts occupy residues 520–550 (KQRT…SSLG), 707–723 (ARSN…SNTG), and 770–782 (SRGQ…SSPS). 2 consecutive SAM domains span residues 824–890 (CPVQ…LPRV) and 898–963 (NNPT…RLHE). Disordered regions lie at residues 960–994 (RLHE…LSQA) and 1208–1243 (GSST…MDQK). Residues 980–994 (GNHTPPQLSPSLSQA) are compositionally biased toward polar residues. One can recognise a PID domain in the interval 1071–1223 (IFQSCDYEAY…ESFDSKPSKP (153 aa)).

It is found in the cytoplasm. This is Ankyrin repeat and sterile alpha motif domain-containing protein 1B (anks1b) from Danio rerio (Zebrafish).